A 389-amino-acid polypeptide reads, in one-letter code: SH2 domain-containing protein 2A (389 aa).

The interval alanine 41 to proline 63 is disordered. Residues tryptophan 95–leucine 186 form the SH2 domain. The tract at residues threonine 190–glycine 295 is disordered. Residues serine 203–tyrosine 216 are compositionally biased toward polar residues. Serine 217 carries the post-translational modification Phosphoserine. 2 consecutive short sequence motifs (SH3-binding) follow at residues arginine 244–proline 250 and arginine 272–proline 278. Residues proline 245 to proline 256 are compositionally biased toward pro residues. Serine 296 is modified (phosphoserine). The interval lysine 324–glutamine 389 is disordered. Over residues glycine 337–isoleucine 348 the composition is skewed to polar residues. Residues proline 352 to alanine 361 show a composition bias toward pro residues.

Interacts with KDR. Interacts with TXK and ITK. Post-translationally, phosphorylated on tyrosine residues. As to expression, expression limited to tissues of the immune system and, in particular, activated T-cells. Expressed in peripheral blood leukocytes, thymus and spleen. Much lower expression or undetectable, in brain, placenta, skeletal muscle, prostate, testis, ovary, small intestine, and colon. Expressed at low levels in unstimulated T-cells, but not expressed in normal resting or activated B-cells. According to PubMed:10692392, expression is not restricted to activated T-cells, but strongly expressed in blood cell lineages, the endothelium and other cell and tissue types, such as heart, lung, and liver.

The protein resides in the cytoplasm. In terms of biological role, could be a T-cell-specific adapter protein involved in the control of T-cell activation. May play a role in the CD4-p56-LCK-dependent signal transduction pathway. Could also play an important role in normal and pathological angiogenesis. Could be an adapter protein that facilitates and regulates interaction of KDR with effector proteins important to endothelial cell survival and proliferation. The sequence is that of SH2 domain-containing protein 2A (SH2D2A) from Homo sapiens (Human).